The sequence spans 389 residues: Succinate--CoA ligase [ADP-forming] subunit beta (389 aa).

The region spanning lysine 9–glutamate 244 is the ATP-grasp domain. ATP contacts are provided by residues lysine 46, glycine 53–glycine 55, glutamate 99, alanine 102, and glutamate 107. Residues asparagine 199 and aspartate 213 each coordinate Mg(2+). Residues asparagine 264 and glycine 321–valine 323 each bind substrate.

It belongs to the succinate/malate CoA ligase beta subunit family. Heterotetramer of two alpha and two beta subunits. The cofactor is Mg(2+).

It carries out the reaction succinate + ATP + CoA = succinyl-CoA + ADP + phosphate. The catalysed reaction is GTP + succinate + CoA = succinyl-CoA + GDP + phosphate. The protein operates within carbohydrate metabolism; tricarboxylic acid cycle; succinate from succinyl-CoA (ligase route): step 1/1. Its function is as follows. Succinyl-CoA synthetase functions in the citric acid cycle (TCA), coupling the hydrolysis of succinyl-CoA to the synthesis of either ATP or GTP and thus represents the only step of substrate-level phosphorylation in the TCA. The beta subunit provides nucleotide specificity of the enzyme and binds the substrate succinate, while the binding sites for coenzyme A and phosphate are found in the alpha subunit. The protein is Succinate--CoA ligase [ADP-forming] subunit beta of Histophilus somni (strain 2336) (Haemophilus somnus).